The sequence spans 71 residues: uncharacterized protein (71 aa).

This is an uncharacterized protein from Vaccinia virus (strain Copenhagen) (VACV).